We begin with the raw amino-acid sequence, 270 residues long: Acyl-[acyl-carrier-protein]--UDP-N-acetylglucosamine O-acyltransferase (270 aa).

Belongs to the transferase hexapeptide repeat family. LpxA subfamily. Homotrimer.

The protein resides in the cytoplasm. The enzyme catalyses a (3R)-hydroxyacyl-[ACP] + UDP-N-acetyl-alpha-D-glucosamine = a UDP-3-O-[(3R)-3-hydroxyacyl]-N-acetyl-alpha-D-glucosamine + holo-[ACP]. It functions in the pathway glycolipid biosynthesis; lipid IV(A) biosynthesis; lipid IV(A) from (3R)-3-hydroxytetradecanoyl-[acyl-carrier-protein] and UDP-N-acetyl-alpha-D-glucosamine: step 1/6. Involved in the biosynthesis of lipid A, a phosphorylated glycolipid that anchors the lipopolysaccharide to the outer membrane of the cell. This Helicobacter pylori (strain P12) protein is Acyl-[acyl-carrier-protein]--UDP-N-acetylglucosamine O-acyltransferase.